We begin with the raw amino-acid sequence, 290 residues long: Probable lipid hydrolase 463L (290 aa).

The next 2 helical transmembrane spans lie at 26–46 (TLVLSGGAMRGVYLLGALNGL) and 53–73 (ISTFIGISSGSIICFLLSIGY). The 181-residue stretch at 27–207 (LVLSGGAMRG…WNNFPIDIAI (181 aa)) folds into the PNPLA domain. Residues 58 to 62 (GISSG) carry the GXSXG motif. Catalysis depends on Ser-60, which acts as the Nucleophile. Asp-194 serves as the catalytic Proton acceptor. The DGA/G signature appears at 194–196 (DGG).

The protein localises to the membrane. Probable lipid hydrolase. The chain is Probable lipid hydrolase 463L from Invertebrate iridescent virus 6 (IIV-6).